The chain runs to 901 residues: Core protein VP3 (901 aa).

Belongs to the orbivirus VP3 family.

The protein resides in the virion. The VP3 protein is one of the five proteins (with VP1, VP4, VP6 and VP7) which form the inner capsid of the virus. In Antilocapra americana (Pronghorn), this protein is Core protein VP3 (Segment-3).